Reading from the N-terminus, the 465-residue chain is Serine/threonine-protein kinase AtPK1/AtPK6 (465 aa).

Positions 91–96 (LVECLE) match the LVxCxE motif motif. The 256-residue stretch at 134 to 389 (FEVMKVVGKG…AEEIKQHKWF (256 aa)) folds into the Protein kinase domain. ATP is bound by residues 140–148 (VGKGAFGKV) and K163. The Proton acceptor role is filled by D257. Residues 275–301 (DFGLAKEFEENTRSNSMCGTTEYMAPE) form an activation loop region. Position 290 is a phosphoserine; by PDPK1 (S290). The region spanning 390–460 (KGINWKKLEA…VRPPPSFLHQ (71 aa)) is the AGC-kinase C-terminal domain. T449 bears the Phosphothreonine; by TOR mark.

Belongs to the protein kinase superfamily. AGC Ser/Thr protein kinase family. S6 kinase subfamily. Interacts with RAPTOR1. Interacts with RBR1-E2FB complex through its LVxCxE motif. Interacts with TAP46. Binds to MRF1. In terms of processing, undergoes serine-specific autophosphorylation. Phosphorylated at Thr-449 by TOR. Expressed in all tissues.

It is found in the cytoplasm. Its subcellular location is the nucleus. The catalysed reaction is L-seryl-[protein] + ATP = O-phospho-L-seryl-[protein] + ADP + H(+). The enzyme catalyses L-threonyl-[protein] + ATP = O-phospho-L-threonyl-[protein] + ADP + H(+). With respect to regulation, activated by PDK1. Repressed during osmotic stress. Downstream effector of TOR signaling pathway involved in osmotic stress response. Could be involved in the control of plant growth and development. Phosphorylates the ribosomal proteins P14, P16 and S6. Functions as a repressor of cell proliferation and required for maintenance of chromosome stability and ploidy levels through the RBR1-E2F pathway. Mediates the phosphorylation of MRFs (e.g. MRF1). The sequence is that of Serine/threonine-protein kinase AtPK1/AtPK6 from Arabidopsis thaliana (Mouse-ear cress).